Here is a 369-residue protein sequence, read N- to C-terminus: Anhydro-N-acetylmuramic acid kinase (369 aa).

An ATP-binding site is contributed by glycine 12–aspartate 19.

The protein belongs to the anhydro-N-acetylmuramic acid kinase family.

The catalysed reaction is 1,6-anhydro-N-acetyl-beta-muramate + ATP + H2O = N-acetyl-D-muramate 6-phosphate + ADP + H(+). It participates in amino-sugar metabolism; 1,6-anhydro-N-acetylmuramate degradation. The protein operates within cell wall biogenesis; peptidoglycan recycling. Its function is as follows. Catalyzes the specific phosphorylation of 1,6-anhydro-N-acetylmuramic acid (anhMurNAc) with the simultaneous cleavage of the 1,6-anhydro ring, generating MurNAc-6-P. Is required for the utilization of anhMurNAc either imported from the medium or derived from its own cell wall murein, and thus plays a role in cell wall recycling. This is Anhydro-N-acetylmuramic acid kinase from Shewanella halifaxensis (strain HAW-EB4).